The primary structure comprises 463 residues: tRNA-2-methylthio-N(6)-dimethylallyladenosine synthase (463 aa).

One can recognise an MTTase N-terminal domain in the interval 19–135 (RSYWITTFGC…LENLLGKVDL (117 aa)). Residues C28, C64, C98, C170, C174, and C177 each contribute to the [4Fe-4S] cluster site. The Radical SAM core domain occupies 156 to 393 (RESSICGWVN…NALVEKTARN (238 aa)). In terms of domain architecture, TRAM spans 396–463 (QRYINNIESV…RPFSLTGELC (68 aa)).

Belongs to the methylthiotransferase family. MiaB subfamily. Monomer. [4Fe-4S] cluster is required as a cofactor.

The protein localises to the cytoplasm. It catalyses the reaction N(6)-dimethylallyladenosine(37) in tRNA + (sulfur carrier)-SH + AH2 + 2 S-adenosyl-L-methionine = 2-methylsulfanyl-N(6)-dimethylallyladenosine(37) in tRNA + (sulfur carrier)-H + 5'-deoxyadenosine + L-methionine + A + S-adenosyl-L-homocysteine + 2 H(+). Functionally, catalyzes the methylthiolation of N6-(dimethylallyl)adenosine (i(6)A), leading to the formation of 2-methylthio-N6-(dimethylallyl)adenosine (ms(2)i(6)A) at position 37 in tRNAs that read codons beginning with uridine. This Prochlorococcus marinus (strain MIT 9312) protein is tRNA-2-methylthio-N(6)-dimethylallyladenosine synthase.